We begin with the raw amino-acid sequence, 441 residues long: Cysteine--tRNA ligase (441 aa).

Cys24 contributes to the Zn(2+) binding site. Positions 26-36 match the 'HIGH' region motif; the sequence is PTVYNYIHIGN. Positions 204, 230, and 234 each coordinate Zn(2+). Positions 262 to 266 match the 'KMSKS' region motif; sequence KMSKS. Position 265 (Lys265) interacts with ATP.

The protein belongs to the class-I aminoacyl-tRNA synthetase family. In terms of assembly, monomer. Requires Zn(2+) as cofactor.

It is found in the cytoplasm. It carries out the reaction tRNA(Cys) + L-cysteine + ATP = L-cysteinyl-tRNA(Cys) + AMP + diphosphate. The polypeptide is Cysteine--tRNA ligase (Mycoplasma capricolum subsp. capricolum (strain California kid / ATCC 27343 / NCTC 10154)).